A 205-amino-acid chain; its full sequence is Small ribosomal subunit protein uS4 (205 aa).

A disordered region spans residues 19–45 (IWGRPKSPVNRREYGPGQHGQRRKGKL). Residues 94-157 (SRLDAVVYRA…KQLAIVLEAV (64 aa)) form the S4 RNA-binding domain.

The protein belongs to the universal ribosomal protein uS4 family. Part of the 30S ribosomal subunit. Contacts protein S5. The interaction surface between S4 and S5 is involved in control of translational fidelity.

In terms of biological role, one of the primary rRNA binding proteins, it binds directly to 16S rRNA where it nucleates assembly of the body of the 30S subunit. Functionally, with S5 and S12 plays an important role in translational accuracy. The chain is Small ribosomal subunit protein uS4 from Brucella suis biovar 1 (strain 1330).